Here is a 299-residue protein sequence, read N- to C-terminus: tRNA dimethylallyltransferase (299 aa).

10 to 17 (GPTAVGKT) provides a ligand contact to ATP. A substrate-binding site is contributed by 12 to 17 (TAVGKT). Residues 35–38 (DSQQ) are interaction with substrate tRNA.

Belongs to the IPP transferase family. As to quaternary structure, monomer. The cofactor is Mg(2+).

The catalysed reaction is adenosine(37) in tRNA + dimethylallyl diphosphate = N(6)-dimethylallyladenosine(37) in tRNA + diphosphate. Functionally, catalyzes the transfer of a dimethylallyl group onto the adenine at position 37 in tRNAs that read codons beginning with uridine, leading to the formation of N6-(dimethylallyl)adenosine (i(6)A). This Streptococcus thermophilus (strain ATCC BAA-250 / LMG 18311) protein is tRNA dimethylallyltransferase.